The chain runs to 285 residues: Homeobox protein Hox-A4 (285 aa).

2 disordered regions span residues 19-70 and 94-130; these read PFEE…APRA and ASPGRPEQSPAPGAHPSPAPQPPVPLGHCAPGPTTPA. Residues 27–41 show a composition bias toward gly residues; it reads GGPGGGDGAVGGGPG. Low complexity predominate over residues 44-70; that stretch reads RPQSAPHLPAPNPHAARQPPAYYAPRA. A compositionally biased stretch (pro residues) spans 106–118; that stretch reads GAHPSPAPQPPVP. Residues 159 to 164 carry the Antp-type hexapeptide motif; the sequence is VYPWMK. A DNA-binding region (homeobox) is located at residues 180-239; the sequence is PKRSRTAYTRQQVLELEKEFHFNRYLTRRRRIEIAHTLCLSERQVKIWFQNRRMKWKKDH. Residues 238–285 are disordered; the sequence is DHKLPNTKMRSSNTASAPAGPPGKAQTHSPHHHPHPLPGASTPIPSSI.

This sequence belongs to the Antp homeobox family. Deformed subfamily.

The protein resides in the nucleus. In terms of biological role, sequence-specific transcription factor which is part of a developmental regulatory system that provides cells with specific positional identities on the anterior-posterior axis. Binds to sites in the 5'-flanking sequence of its coding region with various affinities. The consensus sequences of the high and low affinity binding sites are 5'-TAATGA[CG]-3' and 5'-CTAATTTT-3'. This Mus musculus (Mouse) protein is Homeobox protein Hox-A4 (Hoxa4).